Reading from the N-terminus, the 279-residue chain is MTQPDRYAVFGHPIEHSQSPRIHALFAAQTGQDLIYTAEDVPPDRFESCVRAFFDGGGRGLNCTIPLKEMAWLLADSRSGRAKRARAVNTLLLRADGSIFGDNTDGIGLLRDLRDNLGLNLAGTKILILGAGGATRGILAPLLAERPDRLVIANRTVATAETLTVEFGDLGPVEGCGFAALAGRRFDLIINATAASLSGELPPLPADILAPGGSCYDLAYAAEPTPFVRWGQEKQAVVSADGIGMLVEQAAEAFLLWRGVRPQTRPVIETLEAERRTAK.

Shikimate is bound by residues 17–19 (SQS) and Thr-64. Residue Lys-68 is the Proton acceptor of the active site. Positions 89 and 105 each coordinate shikimate. Residues 130-134 (GAGGA) and Leu-218 each bind NADP(+). Shikimate is bound at residue Tyr-220. Residue Gly-242 participates in NADP(+) binding.

This sequence belongs to the shikimate dehydrogenase family. In terms of assembly, homodimer.

It carries out the reaction shikimate + NADP(+) = 3-dehydroshikimate + NADPH + H(+). It functions in the pathway metabolic intermediate biosynthesis; chorismate biosynthesis; chorismate from D-erythrose 4-phosphate and phosphoenolpyruvate: step 4/7. Involved in the biosynthesis of the chorismate, which leads to the biosynthesis of aromatic amino acids. Catalyzes the reversible NADPH linked reduction of 3-dehydroshikimate (DHSA) to yield shikimate (SA). The sequence is that of Shikimate dehydrogenase (NADP(+)) from Methylococcus capsulatus (strain ATCC 33009 / NCIMB 11132 / Bath).